Consider the following 489-residue polypeptide: Threonine/serine exporter (489 aa).

10 consecutive transmembrane segments (helical) span residues 151-171, 174-194, 206-226, 233-253, 268-288, 314-334, 335-355, 356-376, 381-401, and 420-440; these read GFPV…VLLG, WQVS…TSFL, VVGG…ALQF, SQII…VQSL, FFET…GIQL, IIAG…EWSS, VIIA…FVVY, LGPV…GGLL, LIPP…GLAI, and IAVA…GEWI. The segment at 464 to 489 is disordered; sequence FQEEAEQNQRRQRKRPKTNQRFGNKR. Residues 473 to 489 show a composition bias toward basic residues; that stretch reads RRQRKRPKTNQRFGNKR.

This sequence belongs to the ThrE exporter (TC 2.A.79) family.

It localises to the cell membrane. The enzyme catalyses L-threonine(in) + H(+)(out) = L-threonine(out) + H(+)(in). With respect to regulation, transport is inhibited by the proton ionophore carbonyl cyanide m-chlorophenylhydrazone (CCCP). Catalyzes the export of L-threonine and L-serine from the cell to the extracellular environment. Export is dependent on the proton motive force. The protein is Threonine/serine exporter of Corynebacterium glutamicum (Brevibacterium saccharolyticum).